The chain runs to 445 residues: tRNA(Ile)-lysidine synthase (445 aa).

Residue S38–S43 participates in ATP binding.

This sequence belongs to the tRNA(Ile)-lysidine synthase family.

It is found in the cytoplasm. It catalyses the reaction cytidine(34) in tRNA(Ile2) + L-lysine + ATP = lysidine(34) in tRNA(Ile2) + AMP + diphosphate + H(+). In terms of biological role, ligates lysine onto the cytidine present at position 34 of the AUA codon-specific tRNA(Ile) that contains the anticodon CAU, in an ATP-dependent manner. Cytidine is converted to lysidine, thus changing the amino acid specificity of the tRNA from methionine to isoleucine. The sequence is that of tRNA(Ile)-lysidine synthase from Neisseria gonorrhoeae (strain ATCC 700825 / FA 1090).